A 193-amino-acid polypeptide reads, in one-letter code: MIGRIAGTLIEKNPPHLLVDCHGVGYEIDVPMSTFYNLPATGQPVTLLTQLIVREDAHLLYGFGSAAERNTFRELIKITGIGARMALAVLSGMSVSELAQAITLQEAGRLTRVPGIGKKTAERLMLELKGKLGAELGHAPGAAPVHDSAVDILNALLALGYSEKEAATAIKQVPAGTGVSDGIKLALKALSKA.

Residues 1–64 (MIGRIAGTLI…EDAHLLYGFG (64 aa)) are domain I. Residues 65 to 143 (SAAERNTFRE…AELGHAPGAA (79 aa)) form a domain II region. The flexible linker stretch occupies residues 144 to 151 (PVHDSAVD). A domain III region spans residues 151–193 (DILNALLALGYSEKEAATAIKQVPAGTGVSDGIKLALKALSKA).

Belongs to the RuvA family. As to quaternary structure, homotetramer. Forms an RuvA(8)-RuvB(12)-Holliday junction (HJ) complex. HJ DNA is sandwiched between 2 RuvA tetramers; dsDNA enters through RuvA and exits via RuvB. An RuvB hexamer assembles on each DNA strand where it exits the tetramer. Each RuvB hexamer is contacted by two RuvA subunits (via domain III) on 2 adjacent RuvB subunits; this complex drives branch migration. In the full resolvosome a probable DNA-RuvA(4)-RuvB(12)-RuvC(2) complex forms which resolves the HJ.

Its subcellular location is the cytoplasm. Its function is as follows. The RuvA-RuvB-RuvC complex processes Holliday junction (HJ) DNA during genetic recombination and DNA repair, while the RuvA-RuvB complex plays an important role in the rescue of blocked DNA replication forks via replication fork reversal (RFR). RuvA specifically binds to HJ cruciform DNA, conferring on it an open structure. The RuvB hexamer acts as an ATP-dependent pump, pulling dsDNA into and through the RuvAB complex. HJ branch migration allows RuvC to scan DNA until it finds its consensus sequence, where it cleaves and resolves the cruciform DNA. The polypeptide is Holliday junction branch migration complex subunit RuvA (Cupriavidus pinatubonensis (strain JMP 134 / LMG 1197) (Cupriavidus necator (strain JMP 134))).